We begin with the raw amino-acid sequence, 188 residues long: Marginal zone B- and B1-cell-specific protein (188 aa).

The signal sequence occupies residues 1 to 21; that stretch reads MRLPLPLLLLFGCRAILGSFG. Disulfide bonds link Cys49–Cys177, Cys52–Cys170, and Cys94–Cys142. The Prevents secretion from ER signature appears at 185-188; sequence REEL.

This sequence belongs to the MZB1 family. In terms of assembly, part of the ER chaperone complex, a multi-protein complex in the endoplasmic reticulum containing a large number of molecular chaperones which associates with unassembled incompletely folded immunoglobulin heavy chains. Interacts with HSP90B1 and PDIA3 in a calcium-dependent manner. Forms an interchain disulfide bond with IgM monomers.

Its subcellular location is the endoplasmic reticulum lumen. It is found in the secreted. Associates with immunoglobulin M (IgM) heavy and light chains and promotes IgM assembly and secretion. May exert its effect by acting as a molecular chaperone or as an oxidoreductase as it displays a low level of oxidoreductase activity. Helps to diversify peripheral B-cell functions by regulating Ca(2+) stores, antibody secretion, and integrin activation. In terms of biological role, acts as a hormone-regulated adipokine/pro-inflammatory cytokine that is implicated in causing chronic inflammation, affecting cellular expansion and blunting insulin response in adipocytes. May have a role in the onset of insulin resistance. The sequence is that of Marginal zone B- and B1-cell-specific protein (Mzb1) from Rattus norvegicus (Rat).